The sequence spans 406 residues: 8-amino-7-oxononanoate synthase (406 aa).

A substrate-binding site is contributed by arginine 20. 116–117 provides a ligand contact to pyridoxal 5'-phosphate; it reads GY. Histidine 141 serves as a coordination point for substrate. Serine 187, histidine 215, and threonine 243 together coordinate pyridoxal 5'-phosphate. Residue lysine 246 is modified to N6-(pyridoxal phosphate)lysine. Residue threonine 366 coordinates substrate.

Belongs to the class-II pyridoxal-phosphate-dependent aminotransferase family. BioF subfamily. In terms of assembly, homodimer. Pyridoxal 5'-phosphate serves as cofactor.

The enzyme catalyses 6-carboxyhexanoyl-[ACP] + L-alanine + H(+) = (8S)-8-amino-7-oxononanoate + holo-[ACP] + CO2. It functions in the pathway cofactor biosynthesis; biotin biosynthesis. In terms of biological role, catalyzes the decarboxylative condensation of pimeloyl-[acyl-carrier protein] and L-alanine to produce 8-amino-7-oxononanoate (AON), [acyl-carrier protein], and carbon dioxide. The sequence is that of 8-amino-7-oxononanoate synthase from Cupriavidus metallidurans (strain ATCC 43123 / DSM 2839 / NBRC 102507 / CH34) (Ralstonia metallidurans).